The chain runs to 570 residues: PTS system lactose-specific EIICB component (570 aa).

One can recognise a PTS EIIC type-3 domain in the interval 9–410 (IEKGKPFFEK…VVDIIIYYPF (402 aa)). A run of 9 helical transmembrane segments spans residues 31–51 (GFIS…IAYV), 65–85 (AILM…VAGT), 104–124 (INFI…ASDP), 133–153 (AFMG…TVIV), 178–198 (FKDL…DLVI), 223–243 (GWIG…VGIH), 283–303 (MFIV…MFMW), 340–360 (VFFI…KLFV), and 382–402 (IIMG…LIVV). In terms of domain architecture, PTS EIIB type-3 spans 467–570 (QTNVLVLCAG…LDFVQQQFEN (104 aa)). Cysteine 474 (phosphocysteine intermediate; for EIIB activity) is an active-site residue. A Phosphocysteine; by EIIA modification is found at cysteine 474.

Its subcellular location is the cell membrane. The enzyme catalyses lactose(out) + N(pros)-phospho-L-histidyl-[protein] = lactose 6-phosphate(in) + L-histidyl-[protein]. The phosphoenolpyruvate-dependent sugar phosphotransferase system (sugar PTS), a major carbohydrate active transport system, catalyzes the phosphorylation of incoming sugar substrates concomitantly with their translocation across the cell membrane. The enzyme II LacEF PTS system is involved in lactose transport. The chain is PTS system lactose-specific EIICB component from Staphylococcus aureus (strain N315).